Reading from the N-terminus, the 298-residue chain is MSRPEQQLKKMLKNPQAQYAVYPTAKVERISTTQHMYFIATRPMFEGGRNNVFLGHQVGQPIIFKYVSKKEIPGNEVIVLKALQDTPGVIKLIEYTENAMYHILIIEYIPNSVDLLHYHYFKKLEETEAKKIIFQLILIIQNIYEKGFIHGDIKDENLIIDINQKIIKVIDFGSAVRLDETRPQYNMFGTWEYVCPEFYYYGYYYQLPLTVWTIGMVAVNLFRFRAENFYLNDILKGENYIPENISETGKQFITDCLTINENKRLSFKSLVSHPWFKGLKKEIQPISELGVDYKNVIT.

The 239-residue stretch at 38-276 (FIATRPMFEG…FKSLVSHPWF (239 aa)) folds into the Protein kinase domain. ATP-binding positions include 45–53 (FEGGRNNVF) and K65. The active-site Proton acceptor is D152.

It belongs to the protein kinase superfamily. Ser/Thr protein kinase family.

It localises to the virion. The protein resides in the host cytoplasm. The enzyme catalyses L-seryl-[protein] + ATP = O-phospho-L-seryl-[protein] + ADP + H(+). The catalysed reaction is L-threonyl-[protein] + ATP = O-phospho-L-threonyl-[protein] + ADP + H(+). Functionally, essential for viral replication. It may mediate the virus' progression through DNA replication. The sequence is that of Serine/threonine-protein kinase 1 from Ornithodoros (relapsing fever ticks).